Reading from the N-terminus, the 140-residue chain is UPF0225 protein SAV_6631 (140 aa).

Positions Met1–Cys22 are disordered. Residues Thr10–Pro19 are compositionally biased toward low complexity.

It belongs to the UPF0225 family.

The polypeptide is UPF0225 protein SAV_6631 (Streptomyces avermitilis (strain ATCC 31267 / DSM 46492 / JCM 5070 / NBRC 14893 / NCIMB 12804 / NRRL 8165 / MA-4680)).